A 298-amino-acid chain; its full sequence is Ethanolamine ammonia-lyase small subunit (298 aa).

Adenosylcob(III)alamin-binding residues include V210, E231, and C261.

Belongs to the EutC family. In terms of assembly, the basic unit is a heterodimer which dimerizes to form tetramers. The heterotetramers trimerize; 6 large subunits form a core ring with 6 small subunits projecting outwards. It depends on adenosylcob(III)alamin as a cofactor.

It localises to the bacterial microcompartment. It carries out the reaction ethanolamine = acetaldehyde + NH4(+). It participates in amine and polyamine degradation; ethanolamine degradation. Its function is as follows. Catalyzes the deamination of various vicinal amino-alcohols to oxo compounds. Allows this organism to utilize ethanolamine as the sole source of nitrogen and carbon in the presence of external vitamin B12. In Salmonella heidelberg (strain SL476), this protein is Ethanolamine ammonia-lyase small subunit.